The primary structure comprises 412 residues: Putative pectate lyase 11 (412 aa).

The signal sequence occupies residues 1-24 (MVSYSNNHFAYAFLLLLTIGNTLA). Ca(2+) is bound by residues Asp-210, Asp-234, and Asp-238. The active site involves Arg-290.

The protein belongs to the polysaccharide lyase 1 family. Requires Ca(2+) as cofactor.

The enzyme catalyses Eliminative cleavage of (1-&gt;4)-alpha-D-galacturonan to give oligosaccharides with 4-deoxy-alpha-D-galact-4-enuronosyl groups at their non-reducing ends.. The protein operates within glycan metabolism; pectin degradation; 2-dehydro-3-deoxy-D-gluconate from pectin: step 2/5. The sequence is that of Putative pectate lyase 11 from Arabidopsis thaliana (Mouse-ear cress).